Reading from the N-terminus, the 682-residue chain is Potassium-transporting ATPase ATP-binding subunit (682 aa).

4 consecutive transmembrane segments (helical) span residues 34 to 54 (PVMF…IAMA), 62 to 82 (ALFS…ANFA), 219 to 239 (IALT…TATL), and 254 to 274 (VLVA…LSAI). Aspartate 307 serves as the catalytic 4-aspartylphosphate intermediate. Residues aspartate 344, glutamate 348, 377-384 (FTAQSRMS), and lysine 395 each bind ATP. Mg(2+) is bound by residues aspartate 518 and aspartate 522. Helical transmembrane passes span 588 to 608 (FAII…LNIM), 616 to 636 (AILS…PLAL), and 662 to 682 (LLVP…CGLV).

This sequence belongs to the cation transport ATPase (P-type) (TC 3.A.3) family. Type IA subfamily. The system is composed of three essential subunits: KdpA, KdpB and KdpC.

The protein localises to the cell inner membrane. It carries out the reaction K(+)(out) + ATP + H2O = K(+)(in) + ADP + phosphate + H(+). In terms of biological role, part of the high-affinity ATP-driven potassium transport (or Kdp) system, which catalyzes the hydrolysis of ATP coupled with the electrogenic transport of potassium into the cytoplasm. This subunit is responsible for energy coupling to the transport system and for the release of the potassium ions to the cytoplasm. The sequence is that of Potassium-transporting ATPase ATP-binding subunit from Escherichia coli O81 (strain ED1a).